We begin with the raw amino-acid sequence, 328 residues long: Phenylalanine--tRNA ligase alpha subunit (328 aa).

Residue E253 coordinates Mg(2+).

The protein belongs to the class-II aminoacyl-tRNA synthetase family. Phe-tRNA synthetase alpha subunit type 1 subfamily. As to quaternary structure, tetramer of two alpha and two beta subunits. Mg(2+) serves as cofactor.

It localises to the cytoplasm. It catalyses the reaction tRNA(Phe) + L-phenylalanine + ATP = L-phenylalanyl-tRNA(Phe) + AMP + diphosphate + H(+). This is Phenylalanine--tRNA ligase alpha subunit from Coxiella burnetii (strain Dugway 5J108-111).